Consider the following 233-residue polypeptide: Protein Thf1 (233 aa).

A coiled-coil region spans residues D183–V205. The interval D213–E233 is disordered.

The protein belongs to the THF1 family.

May be involved in photosynthetic membrane biogenesis. This Trichormus variabilis (strain ATCC 29413 / PCC 7937) (Anabaena variabilis) protein is Protein Thf1.